The primary structure comprises 113 residues: Large ribosomal subunit protein bL19 (113 aa).

The protein belongs to the bacterial ribosomal protein bL19 family.

This protein is located at the 30S-50S ribosomal subunit interface and may play a role in the structure and function of the aminoacyl-tRNA binding site. This Mycobacterium bovis (strain ATCC BAA-935 / AF2122/97) protein is Large ribosomal subunit protein bL19 (rplS).